The sequence spans 970 residues: Rho GTPase-activating protein gacK (970 aa).

Positions 1–20 are cleaved as a signal peptide; sequence MTLVYEKSSFVLIMAQIAEA. Disordered regions lie at residues 30-49, 258-285, 312-446, 487-550, and 860-886; these read SNDL…SAAI, STCS…INQN, EITI…FSPT, STSN…NNNN, and TASS…NDDP. 2 stretches are compositionally biased toward low complexity: residues 35–49 and 258–269; these read STSA…SAAI and STCSLSSNASNN. Residues 321–333 are compositionally biased toward pro residues; that stretch reads IPLPPQSSSPPPT. Low complexity predominate over residues 334–383; sequence RNNQSSPSPSSPQQQNIMPTPPSTSLTPPQSPTLSPSSSTHSTPTQTTTT. A compositionally biased stretch (polar residues) spans 392–406; it reads PSTISQNNARKTQIP. Residues 407–426 are compositionally biased toward low complexity; that stretch reads TTTTTTTTTTTTTSTTSTTS. Residues 427–446 show a composition bias toward polar residues; that stretch reads PNPVVNNKNLNTPSSSFSPT. Positions 754 to 970 constitute a Rho-GAP domain; that stretch reads IEDSELVEDN…LELIQFNKSL (217 aa). Residues 860-885 show a composition bias toward low complexity; the sequence is TASSAATANSSSSGSGNGNSSPNNDD.

Its subcellular location is the cytoplasm. Rho GTPase-activating protein involved in the signal transduction pathway. The protein is Rho GTPase-activating protein gacK (gacK) of Dictyostelium discoideum (Social amoeba).